A 511-amino-acid polypeptide reads, in one-letter code: Glycerol kinase (511 aa).

Thr-11 provides a ligand contact to ADP. Residues Thr-11, Ser-12, and Ser-13 each coordinate ATP. Residue Thr-11 participates in sn-glycerol 3-phosphate binding. Arg-15 lines the ADP pocket. Sn-glycerol 3-phosphate is bound by residues Arg-81, Glu-82, Tyr-133, and Asp-242. Glycerol contacts are provided by Arg-81, Glu-82, Tyr-133, Asp-242, and Gln-243. Residues Thr-264 and Gly-321 each coordinate ADP. Residues Thr-264, Gly-321, Gln-325, and Gly-426 each coordinate ATP. Positions 426 and 430 each coordinate ADP.

The protein belongs to the FGGY kinase family.

It catalyses the reaction glycerol + ATP = sn-glycerol 3-phosphate + ADP + H(+). The protein operates within polyol metabolism; glycerol degradation via glycerol kinase pathway; sn-glycerol 3-phosphate from glycerol: step 1/1. With respect to regulation, inhibited by fructose 1,6-bisphosphate (FBP). Functionally, key enzyme in the regulation of glycerol uptake and metabolism. Catalyzes the phosphorylation of glycerol to yield sn-glycerol 3-phosphate. The chain is Glycerol kinase from Verminephrobacter eiseniae (strain EF01-2).